The chain runs to 227 residues: Translation initiation factor 6 (227 aa).

This sequence belongs to the eIF-6 family.

Its function is as follows. Binds to the 50S ribosomal subunit and prevents its association with the 30S ribosomal subunit to form the 70S initiation complex. This is Translation initiation factor 6 from Pyrococcus abyssi (strain GE5 / Orsay).